Consider the following 91-residue polypeptide: Small ribosomal subunit protein bS6 (91 aa).

The protein belongs to the bacterial ribosomal protein bS6 family.

Binds together with bS18 to 16S ribosomal RNA. The protein is Small ribosomal subunit protein bS6 of Leptospira biflexa serovar Patoc (strain Patoc 1 / Ames).